The primary structure comprises 171 residues: Protein BTG1 (171 aa).

Ser-159 carries the phosphoserine modification.

The protein belongs to the BTG family. As to quaternary structure, interacts with CNOT7 and CNOT8.

Functionally, anti-proliferative protein. The sequence is that of Protein BTG1 (Btg1) from Rattus norvegicus (Rat).